The following is an 852-amino-acid chain: Leucine--tRNA ligase (852 aa).

The 'HIGH' region motif lies at 51-61 (PYPSGDLHMGH). The 'KMSKS' region signature appears at 615–619 (KMSKS). Lys618 serves as a coordination point for ATP.

The protein belongs to the class-I aminoacyl-tRNA synthetase family.

It is found in the cytoplasm. It catalyses the reaction tRNA(Leu) + L-leucine + ATP = L-leucyl-tRNA(Leu) + AMP + diphosphate. The polypeptide is Leucine--tRNA ligase (Clavibacter sepedonicus (Clavibacter michiganensis subsp. sepedonicus)).